The following is a 400-amino-acid chain: MARASAAAPLPRRPARPRAPSSSYRPVRPCIDPSVMLNALPDPVLVVDGSGDIRYVNLEAQEFFGLSAAMMEGMPLAELLPPNSPVSQLIEQVQQGRHRASQEGVVIDTPRIGPHHVTVRVTALGEPADHVLLTVNERTLARKIDNSLTHRNAARSVTAMASMLGHEVKNPLSGIRGAAQLLEENCSESDRVLTRLICDEADRIVALVNRMEVFSDQRPLERDAVNIHTVLEHVRKVAQSGFARNIRFIERYDPSLPPVYGNRDQLIQIFLNLIKNAAEAAPESGGEIILSTSYQHGVRMALPGGDTRLHLPLLVSVQDNGDGIPDDLRSNLFDAFITTKVNGTGLGLALVAKIVGDHGGVIEFDSQPRRTVFKVSLPMFDEAQMSGDPAPARGIRGAIG.

2 stretches are compositionally biased toward low complexity: residues 1 to 10 (MARASAAAPL) and 18 to 27 (RAPSSSYRPV). A disordered region spans residues 1-27 (MARASAAAPLPRRPARPRAPSSSYRPV). Residues 29–99 (PCIDPSVMLN…IEQVQQGRHR (71 aa)) enclose the PAS domain. Residues 163-381 (MLGHEVKNPL…VFKVSLPMFD (219 aa)) enclose the Histidine kinase domain. Position 166 is a phosphohistidine; by autocatalysis (H166).

In terms of processing, autophosphorylated.

Its subcellular location is the cytoplasm. The catalysed reaction is ATP + protein L-histidine = ADP + protein N-phospho-L-histidine.. Member of the two-component regulatory system NtrB/NtrC, which controls expression of the nitrogen-regulated (ntr) genes in response to nitrogen limitation. Under conditions of nitrogen limitation, NtrB autophosphorylates and transfers the phosphoryl group to NtrC. In the presence of nitrogen, acts as a phosphatase that dephosphorylates and inactivates NtrC. The sequence is that of Sensory histidine kinase/phosphatase NtrB from Azospirillum brasilense.